We begin with the raw amino-acid sequence, 550 residues long: PAB1-binding protein 1 (550 aa).

Positions 11 to 95 (RLEYLYLNLV…IVMIEVQNAK (85 aa)) constitute a Sm domain. Disordered stretches follow at residues 201–296 (HDDE…HKRM) and 441–550 (GMGN…RVGK). A compositionally biased stretch (basic and acidic residues) spans 214–223 (DVHRPQEKKP). Over residues 244-262 (AAAAPATAPTTAPAAAPAP) the composition is skewed to low complexity. Over residues 263-281 (AAAPPAAAPAAAAPPPPPA) the composition is skewed to pro residues.

The protein belongs to the ataxin-2 family. As to quaternary structure, forms a complex composed of at least MKT1, PBP1, XAC1 and LSM12. Forms a complex composed of at least MKT1L, PBP1, XAC1 and LSM12. Within the complex, interacts with MKT1 (via C-terminus); the interaction is direct. Interacts (via C-terminus) with ZC3H11; the interaction is direct.

The protein resides in the cytoplasm. Its subcellular location is the cytosol. The protein localises to the stress granule. Functionally, involved in post-transcriptional regulation of gene expression. Promotes mRNA stabilization by bridging poly(A)-binding protein to mRNAs. In Trypanosoma brucei brucei (strain 927/4 GUTat10.1), this protein is PAB1-binding protein 1.